A 162-amino-acid chain; its full sequence is NADH-quinone oxidoreductase subunit I (162 aa).

4Fe-4S ferredoxin-type domains are found at residues 53 to 83 and 93 to 122; these read LRRY…IEAE and TRYD…ETRI. [4Fe-4S] cluster is bound by residues Cys-63, Cys-66, Cys-69, Cys-73, Cys-102, Cys-105, Cys-108, and Cys-112.

This sequence belongs to the complex I 23 kDa subunit family. NDH-1 is composed of 14 different subunits. Subunits NuoA, H, J, K, L, M, N constitute the membrane sector of the complex. [4Fe-4S] cluster serves as cofactor.

It localises to the cell inner membrane. The catalysed reaction is a quinone + NADH + 5 H(+)(in) = a quinol + NAD(+) + 4 H(+)(out). Its function is as follows. NDH-1 shuttles electrons from NADH, via FMN and iron-sulfur (Fe-S) centers, to quinones in the respiratory chain. The immediate electron acceptor for the enzyme in this species is believed to be ubiquinone. Couples the redox reaction to proton translocation (for every two electrons transferred, four hydrogen ions are translocated across the cytoplasmic membrane), and thus conserves the redox energy in a proton gradient. The chain is NADH-quinone oxidoreductase subunit I from Dechloromonas aromatica (strain RCB).